The sequence spans 221 residues: Adenylate kinase (221 aa).

10-15 (GAGKGT) serves as a coordination point for ATP. The interval 30–59 (STGDIFRQNLRDNTELGKLAKEYMDKGLLV) is NMP. AMP is bound by residues Thr31, Arg36, 57–59 (LLV), 85–88 (GYPR), and Gln92. Residues 126-163 (GRRVCPVCGATYHIKTSPPKVDNVCDKCGSELIQRSDD) form an LID region. An ATP-binding site is contributed by Arg127. Zn(2+) contacts are provided by Cys130 and Cys133. 136–137 (TY) contacts ATP. Zn(2+) contacts are provided by Cys150 and Cys153. AMP contacts are provided by Arg160 and Arg171. Lys199 contacts ATP.

This sequence belongs to the adenylate kinase family. As to quaternary structure, monomer.

The protein resides in the cytoplasm. The catalysed reaction is AMP + ATP = 2 ADP. It participates in purine metabolism; AMP biosynthesis via salvage pathway; AMP from ADP: step 1/1. Functionally, catalyzes the reversible transfer of the terminal phosphate group between ATP and AMP. Plays an important role in cellular energy homeostasis and in adenine nucleotide metabolism. In Caldanaerobacter subterraneus subsp. tengcongensis (strain DSM 15242 / JCM 11007 / NBRC 100824 / MB4) (Thermoanaerobacter tengcongensis), this protein is Adenylate kinase.